A 226-amino-acid chain; its full sequence is PKHD-type hydroxylase BP3529 (226 aa).

Residues 78 to 178 enclose the Fe2OG dioxygenase domain; sequence KIFPPLFNRY…RISAFFWLQS (101 aa). Fe cation-binding residues include H96, D98, and H159. Residue R169 coordinates 2-oxoglutarate.

Requires Fe(2+) as cofactor. It depends on L-ascorbate as a cofactor.

The polypeptide is PKHD-type hydroxylase BP3529 (Bordetella pertussis (strain Tohama I / ATCC BAA-589 / NCTC 13251)).